Reading from the N-terminus, the 486-residue chain is N-succinylglutamate 5-semialdehyde dehydrogenase (486 aa).

Position 220 to 225 (220 to 225 (GSSRTG)) interacts with NAD(+). Catalysis depends on residues Glu-243 and Cys-277.

It belongs to the aldehyde dehydrogenase family. AstD subfamily.

The enzyme catalyses N-succinyl-L-glutamate 5-semialdehyde + NAD(+) + H2O = N-succinyl-L-glutamate + NADH + 2 H(+). The protein operates within amino-acid degradation; L-arginine degradation via AST pathway; L-glutamate and succinate from L-arginine: step 4/5. In terms of biological role, catalyzes the NAD-dependent reduction of succinylglutamate semialdehyde into succinylglutamate. The chain is N-succinylglutamate 5-semialdehyde dehydrogenase from Shewanella baltica (strain OS155 / ATCC BAA-1091).